A 156-amino-acid polypeptide reads, in one-letter code: MVRRFKRAVKYRRGSRTHGWGRVGQHRKSGGSGGKGMVGFHKHKWSLVMKYGESGTGWPFYGKHGFKQPQAISIEWRPINVGTLAEVVRGLKREGRVKEEGGRYVVNLVELGFNKLLGGGDVDLPIVVYTPAASRSAVEKIEKAGGEVRIVPAVHR.

The span at 1–16 (MVRRFKRAVKYRRGSR) shows a compositional bias: basic residues. The tract at residues 1–35 (MVRRFKRAVKYRRGSRTHGWGRVGQHRKSGGSGGK) is disordered.

Belongs to the universal ribosomal protein uL15 family. Part of the 50S ribosomal subunit.

In terms of biological role, binds to the 23S rRNA. The protein is Large ribosomal subunit protein uL15 of Pyrobaculum neutrophilum (strain DSM 2338 / JCM 9278 / NBRC 100436 / V24Sta) (Thermoproteus neutrophilus).